A 204-amino-acid polypeptide reads, in one-letter code: Large ribosomal subunit protein uL4 (204 aa).

The disordered stretch occupies residues Thr49 to Ser75.

This sequence belongs to the universal ribosomal protein uL4 family. In terms of assembly, part of the 50S ribosomal subunit.

Functionally, one of the primary rRNA binding proteins, this protein initially binds near the 5'-end of the 23S rRNA. It is important during the early stages of 50S assembly. It makes multiple contacts with different domains of the 23S rRNA in the assembled 50S subunit and ribosome. Its function is as follows. Forms part of the polypeptide exit tunnel. In Campylobacter hominis (strain ATCC BAA-381 / DSM 21671 / CCUG 45161 / LMG 19568 / NCTC 13146 / CH001A), this protein is Large ribosomal subunit protein uL4.